The chain runs to 237 residues: Sugar fermentation stimulation protein homolog (237 aa).

The protein belongs to the SfsA family.

The polypeptide is Sugar fermentation stimulation protein homolog (Actinobacillus pleuropneumoniae serotype 5b (strain L20)).